Consider the following 466-residue polypeptide: uncharacterized protein (466 aa).

In terms of domain architecture, C2 NT-type spans Asn4–Leu199. Disordered regions lie at residues Ala262–Ile298, Leu374–Met393, and Glu400–Arg452. Over residues Thr266–Ile298 the composition is skewed to polar residues. 2 positions are modified to phosphoserine: Ser433 and Ser439.

This sequence to S.pombe SpCC1494.08c.

This is an uncharacterized protein from Saccharomyces cerevisiae (strain ATCC 204508 / S288c) (Baker's yeast).